The primary structure comprises 444 residues: MSSSYDEASLAPEETTDSFWEVGNYKRTVKRIDDGHRLCNDLMNCVQERAKIEKAYGQQLTDWAKRWRQLIEKGPQYGSLERAWGAIMTEADKVSELHQEVKNNLLNEDLEKVKNWQKDAYHKQIMGGFKETKEAEDGFRKAQKPWAKKMKELEAAKKAYHLACKEEKLAMTREMNSKTEQSVTPEQQKKLQDKVDKCKQDVQKTQEKYEKVLEDVGKTTPQYMENMEQVFEQCQQFEEKRLVFLKEVLLDIKRHLNLAENSSYIHVYRELEQAIRGADAQEDLRWFRSTSGPGMPMNWPQFEEWNPDLPHTTTKKEKQPKKAEGVALTNATGAVESTSQAGDRGSVSSYDRGQPYATEWSDDESGNPFGGSETNGGANPFEDDSKGVRVRALYDYDGQEQDELSFKAGDELTKLGEEDEQGWCRGRLDSGQLGLYPANYVEAI.

2 positions are modified to phosphoserine: Ser-2 and Ser-79. An F-BAR domain is found at 13–283; the sequence is EETTDSFWEV…AIRGADAQED (271 aa). Residues 26 to 275 are a coiled coil; sequence KRTVKRIDDG…HVYRELEQAI (250 aa). 2 disordered regions span residues 175 to 194 and 309 to 386; these read MNSK…LQDK and LPHT…DDSK. Phosphothreonine is present on Thr-184. Positions 314-324 are enriched in basic and acidic residues; it reads TKKEKQPKKAE. A compositionally biased stretch (polar residues) spans 329 to 351; the sequence is TNATGAVESTSQAGDRGSVSSYD. Residues Ser-346, Ser-348, Ser-349, Ser-361, and Ser-365 each carry the phosphoserine modification. An SH3 domain is found at 385–444; it reads SKGVRVRALYDYDGQEQDELSFKAGDELTKLGEEDEQGWCRGRLDSGQLGLYPANYVEAI. Phosphotyrosine is present on Tyr-394. Residues Ser-405 and Ser-430 each carry the phosphoserine modification.

Belongs to the PACSIN family. In terms of assembly, may form heterooligomers with other PACSINs. Interacts with MAPT. Interacts with TRPV4. Interacts (via SH3 domain) with SYNJ1 and WASL. Interacts with DNM2 and DNM3. Interacts with both COBL and DBNL. Identified in a complex composed of COBL, PACSIN1 and WASL. Interacts with EHD1 and EHD3. Homodimer. Interacts (via SH3 domain) with DNM1; the interaction is reduced by DNM1 phosphorylation. In terms of processing, phosphorylated by casein kinase 2 (CK2) and protein kinase C (PKC). In terms of tissue distribution, highly expressed in brain and, at much lower levels, in heart and pancreas.

It is found in the cytoplasm. The protein localises to the cell projection. It localises to the synapse. Its subcellular location is the synaptosome. The protein resides in the ruffle membrane. It is found in the membrane. The protein localises to the cytoplasmic vesicle membrane. It localises to the cytosol. Its subcellular location is the cell membrane. In terms of biological role, plays a role in the reorganization of the microtubule cytoskeleton via its interaction with MAPT; this decreases microtubule stability and inhibits MAPT-induced microtubule polymerization. Plays a role in cellular transport processes by recruiting DNM1, DNM2 and DNM3 to membranes. Plays a role in the reorganization of the actin cytoskeleton and in neuron morphogenesis via its interaction with COBL and WASL, and by recruiting COBL to the cell cortex. Plays a role in the regulation of neurite formation, neurite branching and the regulation of neurite length. Required for normal synaptic vesicle endocytosis; this process retrieves previously released neurotransmitters to accommodate multiple cycles of neurotransmission. Required for normal excitatory and inhibitory synaptic transmission. Binds to membranes via its F-BAR domain and mediates membrane tubulation. This chain is Protein kinase C and casein kinase substrate in neurons protein 1 (PACSIN1), found in Homo sapiens (Human).